The primary structure comprises 343 residues: Ribosomal RNA small subunit methyltransferase C (343 aa).

The protein belongs to the methyltransferase superfamily. RsmC family. Monomer.

The protein localises to the cytoplasm. The catalysed reaction is guanosine(1207) in 16S rRNA + S-adenosyl-L-methionine = N(2)-methylguanosine(1207) in 16S rRNA + S-adenosyl-L-homocysteine + H(+). In terms of biological role, specifically methylates the guanine in position 1207 of 16S rRNA in the 30S particle. The sequence is that of Ribosomal RNA small subunit methyltransferase C from Escherichia coli O8 (strain IAI1).